Reading from the N-terminus, the 685-residue chain is Sulfite reductase [ferredoxin], chloroplastic (685 aa).

Residues 1-51 constitute a chloroplast transit peptide; it reads MTTSFAAAALRDPKLQIPNYHGLRSSSAASSLSRNALSVPSSTRSSSLIRA. Positions 495, 501, 541, and 545 each coordinate [4Fe-4S] cluster. Cysteine 545 serves as a coordination point for siroheme.

It belongs to the nitrite and sulfite reductase 4Fe-4S domain family. As to quaternary structure, monomer. Interacts with ferredoxin. Siroheme serves as cofactor. Requires [4Fe-4S] cluster as cofactor. In terms of processing, phosphorylated; this phosphorylation reduces DNA-binding. In terms of tissue distribution, expressed in leaves, stems, and roots.

Its subcellular location is the plastid. The protein localises to the chloroplast stroma. It is found in the chloroplast nucleoid. It localises to the plastid stroma. It carries out the reaction hydrogen sulfide + 6 oxidized [2Fe-2S]-[ferredoxin] + 3 H2O = sulfite + 6 reduced [2Fe-2S]-[ferredoxin] + 7 H(+). Its function is as follows. Essential protein with sulfite reductase activity required in assimilatory sulfate reduction pathway during both primary and secondary metabolism and thus involved in development and growth. Functionally, DNA-binding protein that binds to both double-stranded and single-stranded DNA without significant sequence specificity to reversibly repress the transcriptional activity of chloroplast nucleoids by promoting DNA compaction and possibly regulate DNA replication. The protein is Sulfite reductase [ferredoxin], chloroplastic (SIR) of Pisum sativum (Garden pea).